A 233-amino-acid chain; its full sequence is N-(5'-phosphoribosyl)anthranilate isomerase (233 aa).

It belongs to the TrpF family.

The catalysed reaction is N-(5-phospho-beta-D-ribosyl)anthranilate = 1-(2-carboxyphenylamino)-1-deoxy-D-ribulose 5-phosphate. It functions in the pathway amino-acid biosynthesis; L-tryptophan biosynthesis; L-tryptophan from chorismate: step 3/5. The polypeptide is N-(5'-phosphoribosyl)anthranilate isomerase (Ralstonia pickettii (strain 12J)).